The following is a 435-amino-acid chain: Tol-Pal system protein TolB (435 aa).

An N-terminal signal peptide occupies residues 1–28 (MTKCSFFRAILVAVGLMTAAVFATPANA). The interval 288–310 (STAAIDTSPSYSPDGARVSFESD) is disordered.

Belongs to the TolB family. The Tol-Pal system is composed of five core proteins: the inner membrane proteins TolA, TolQ and TolR, the periplasmic protein TolB and the outer membrane protein Pal. They form a network linking the inner and outer membranes and the peptidoglycan layer.

It localises to the periplasm. Its function is as follows. Part of the Tol-Pal system, which plays a role in outer membrane invagination during cell division and is important for maintaining outer membrane integrity. The protein is Tol-Pal system protein TolB of Rhizobium johnstonii (strain DSM 114642 / LMG 32736 / 3841) (Rhizobium leguminosarum bv. viciae).